A 289-amino-acid chain; its full sequence is Urease accessory protein UreD (289 aa).

Belongs to the UreD family. As to quaternary structure, ureD, UreF and UreG form a complex that acts as a GTP-hydrolysis-dependent molecular chaperone, activating the urease apoprotein by helping to assemble the nickel containing metallocenter of UreC. The UreE protein probably delivers the nickel.

The protein resides in the cytoplasm. Its function is as follows. Required for maturation of urease via the functional incorporation of the urease nickel metallocenter. The protein is Urease accessory protein UreD of Magnetococcus marinus (strain ATCC BAA-1437 / JCM 17883 / MC-1).